Consider the following 511-residue polypeptide: V-type proton ATPase subunit B (511 aa).

Arg381 contacts ATP. Residues 484–511 (FYGRDREQDDDEEEEEDPDKSGDKLIDA) form a disordered region. Acidic residues predominate over residues 491–501 (QDDDEEEEEDP). Basic and acidic residues predominate over residues 502 to 511 (DKSGDKLIDA).

It belongs to the ATPase alpha/beta chains family. V-ATPase is a heteromultimeric enzyme composed of a peripheral catalytic V1 complex (components A to H) attached to an integral membrane V0 proton pore complex (components: a, c, c', c'', d, e, f and VOA1).

The protein resides in the vacuole membrane. In terms of biological role, non-catalytic subunit of the V1 complex of vacuolar(H+)-ATPase (V-ATPase), a multisubunit enzyme composed of a peripheral complex (V1) that hydrolyzes ATP and a membrane integral complex (V0) that translocates protons. V-ATPase is responsible for acidifying and maintaining the pH of intracellular compartments. This chain is V-type proton ATPase subunit B (VMA2), found in Candida tropicalis (Yeast).